The chain runs to 119 residues: Holo-[acyl-carrier-protein] synthase (119 aa).

Residues aspartate 2 and glutamate 51 each contribute to the Mg(2+) site.

This sequence belongs to the P-Pant transferase superfamily. AcpS family. It depends on Mg(2+) as a cofactor.

It is found in the cytoplasm. It carries out the reaction apo-[ACP] + CoA = holo-[ACP] + adenosine 3',5'-bisphosphate + H(+). In terms of biological role, transfers the 4'-phosphopantetheine moiety from coenzyme A to a Ser of acyl-carrier-protein. The protein is Holo-[acyl-carrier-protein] synthase of Chlorobium luteolum (strain DSM 273 / BCRC 81028 / 2530) (Pelodictyon luteolum).